We begin with the raw amino-acid sequence, 354 residues long: MTSPLITKAEVNSVFQGRSLLAEKDFTPAEINYLVDFGLHLKALKQQNIPHHYLEGKNIALLFAKTSTRTRAAFTTAAIDLGAHPEYLGANDIQLGIKESTEDTARVLGSMFDAIERRGFSQKEVEDLAKYSGVPVWNGLTDDWHPTQMIADFMTVKENFGHLKGLTLVYVGDGRNNMANSLIVTGSMLGVNVHIVAPDSLHPTKEVMDIANKFAEKSGAKPLATSNIEEGVKGANIIYSDVWVSMGESNWEERVKLLTPYRITMDMLKMTGNADNGQLIFMHCLPAFHDTETEYGKEIKEKYGLTEMEVTDEVFRSKYARQFEEAENRMHSIKAIMAATLGNLFIPAVPEDFK.

Residues 67 to 70 (STRT), glutamine 94, arginine 118, and 145 to 148 (HPTQ) contribute to the carbamoyl phosphate site. L-ornithine is bound by residues asparagine 177, aspartate 241, and 245-246 (SM). Carbamoyl phosphate contacts are provided by residues 284 to 285 (CL) and arginine 329.

The protein belongs to the aspartate/ornithine carbamoyltransferase superfamily. OTCase family.

It is found in the cytoplasm. It carries out the reaction carbamoyl phosphate + L-ornithine = L-citrulline + phosphate + H(+). It participates in amino-acid degradation; L-arginine degradation via ADI pathway; carbamoyl phosphate from L-arginine: step 2/2. Its function is as follows. Reversibly catalyzes the transfer of the carbamoyl group from carbamoyl phosphate (CP) to the N(epsilon) atom of ornithine (ORN) to produce L-citrulline. The polypeptide is Ornithine carbamoyltransferase, catabolic (arcB) (Lactococcus lactis subsp. lactis (strain IL1403) (Streptococcus lactis)).